A 213-amino-acid chain; its full sequence is ATP-dependent Clp protease proteolytic subunit (213 aa).

Ser-114 serves as the catalytic Nucleophile. The active site involves His-139.

Belongs to the peptidase S14 family. Fourteen ClpP subunits assemble into 2 heptameric rings which stack back to back to give a disk-like structure with a central cavity, resembling the structure of eukaryotic proteasomes.

The protein resides in the cytoplasm. The catalysed reaction is Hydrolysis of proteins to small peptides in the presence of ATP and magnesium. alpha-casein is the usual test substrate. In the absence of ATP, only oligopeptides shorter than five residues are hydrolyzed (such as succinyl-Leu-Tyr-|-NHMec, and Leu-Tyr-Leu-|-Tyr-Trp, in which cleavage of the -Tyr-|-Leu- and -Tyr-|-Trp bonds also occurs).. Cleaves peptides in various proteins in a process that requires ATP hydrolysis. Has a chymotrypsin-like activity. Plays a major role in the degradation of misfolded proteins. The sequence is that of ATP-dependent Clp protease proteolytic subunit from Pseudomonas putida (strain ATCC 47054 / DSM 6125 / CFBP 8728 / NCIMB 11950 / KT2440).